We begin with the raw amino-acid sequence, 230 residues long: PKHD-type hydroxylase XF_0598 (230 aa).

Positions 78–182 (RTLPPRFNCY…RIASFFWVQS (105 aa)) constitute a Fe2OG dioxygenase domain. 3 residues coordinate Fe cation: H96, D98, and H163. R173 is a 2-oxoglutarate binding site.

Fe(2+) is required as a cofactor. Requires L-ascorbate as cofactor.

The polypeptide is PKHD-type hydroxylase XF_0598 (Xylella fastidiosa (strain 9a5c)).